We begin with the raw amino-acid sequence, 489 residues long: UBX domain-containing protein 7 (489 aa).

N-acetylalanine is present on Ala2. One can recognise a UBA domain in the interval 2–54 (AAHGGSAASSALKGLIQQFTTITGASESVGKHMLEACNNNLEMAVTMFLDGGG). The disordered stretch occupies residues 56 to 77 (AEEPSTSSASVSTVRPHTEEEV). The segment covering 59–70 (PSTSSASVSTVR) has biased composition (polar residues). A Glycyl lysine isopeptide (Lys-Gly) (interchain with G-Cter in SUMO2) cross-link involves residue Lys84. Residue Lys99 forms a Glycyl lysine isopeptide (Lys-Gly) (interchain with G-Cter in ubiquitin) linkage. Lys134 is covalently cross-linked (Glycyl lysine isopeptide (Lys-Gly) (interchain with G-Cter in SUMO2)). Residues Ser278, Ser280, Ser285, and Ser288 each carry the phosphoserine modification. The UIM domain occupies 285–304 (SEDSQLEAAIRASLQETHFD). Over residues 300–309 (ETHFDSTQTK) the composition is skewed to polar residues. Residues 300 to 384 (ETHFDSTQTK…PGTATNHQGL (85 aa)) are disordered. Thr306 is modified (phosphothreonine). The span at 352–366 (HKDLGHRKEENRRPL) shows a compositional bias: basic and acidic residues. The 78-residue stretch at 408–485 (VNGPKAQLML…GLCPQETVFV (78 aa)) folds into the UBX domain.

Interacts with neddylated CUL2, ubiquitinated HIF1A, and VCP/p97.

The protein resides in the nucleus. Functionally, ubiquitin-binding adapter that links a subset of NEDD8-associated cullin ring ligases (CRLs) to the segregase VCP/p97, to regulate turnover of their ubiquitination substrates. This Homo sapiens (Human) protein is UBX domain-containing protein 7 (UBXN7).